A 914-amino-acid polypeptide reads, in one-letter code: Trafficking kinesin-binding protein 2 (914 aa).

Positions 1–21 are enriched in polar residues; it reads MSQSQNAIFTSPTGEENLMNS. The interval 1–30 is disordered; it reads MSQSQNAIFTSPTGEENLMNSNHRDSESIT. The HAP1 N-terminal domain maps to 48 to 353; it reads EEQLPQYRLK…QEEIKELRSR (306 aa). Residues 134 to 354 are a coiled coil; the sequence is QALLKRNHVL…EEIKELRSRS (221 aa). The interaction with HGS stretch occupies residues 359–509; sequence HLYFSQSYGA…KQFFAEEWQR (151 aa). Serine 420 carries the post-translational modification Phosphoserine. Disordered regions lie at residues 447–482 and 765–787; these read QQTE…DSDL and QPLP…SPCP. Polar residues predominate over residues 454 to 471; sequence LLNQGSSSEEVAGSSQKM. Residues 775-787 are compositionally biased toward pro residues; sequence STPPNSPSHSPCP.

This sequence belongs to the milton family. In terms of assembly, interacts with GABA-A receptor and O-GlcNAc transferase. Interacts with HGS. Interacts with RHOT1/Miro-1 and RHOT2/Miro-2. O-glycosylated. Widely expressed, with highest expression in heart.

It localises to the cytoplasm. Its subcellular location is the early endosome. The protein localises to the mitochondrion. In terms of biological role, may regulate endosome-to-lysosome trafficking of membrane cargo, including EGFR. This chain is Trafficking kinesin-binding protein 2 (TRAK2), found in Homo sapiens (Human).